Here is a 187-residue protein sequence, read N- to C-terminus: MIDRNGYRANVGIILLNSKSQVFWGKRARQNSWQFPQGGIKSGETPTQAMYRELAEETGLQPVHVEILGRTREWLRYDVPACWTRRDWRKNYRGQKQIWFLLRMLGRDCDVSLKTCAHPEFDAWRWNQYWVELESVVEFKRQVYRLALTELSRLLDHETCLGNDQAYREPLEPVKELEEKSSDARQG.

A Nudix hydrolase domain is found at G6–T149. The Nudix box motif lies at G38–G59.

It belongs to the Nudix hydrolase family. RppH subfamily. It depends on a divalent metal cation as a cofactor.

Functionally, accelerates the degradation of transcripts by removing pyrophosphate from the 5'-end of triphosphorylated RNA, leading to a more labile monophosphorylated state that can stimulate subsequent ribonuclease cleavage. In Nitrosomonas eutropha (strain DSM 101675 / C91 / Nm57), this protein is RNA pyrophosphohydrolase.